The primary structure comprises 85 residues: uncharacterized protein (85 aa).

The N-terminal stretch at 1 to 35 (MIEDPSKKISLWQKWINVDPKKRILFSLGLFALSA) is a signal peptide.

The protein resides in the secreted. This is an uncharacterized protein from Dictyostelium discoideum (Social amoeba).